The following is a 243-amino-acid chain: Derlin-1.1 (243 aa).

Residues 1–20 (MSSPAEYYKSLPPISKAYGT) lie on the Cytoplasmic side of the membrane. The chain crosses the membrane as a helical span at residues 21–41 (LCFFTTVLVQLQILHPLFLYL). The Lumenal segment spans residues 42 to 55 (DYPLVFKKFEIWRL). A helical membrane pass occupies residues 56-76 (LTSFFFLAPFSMKFGIRLLMI). Over 77 to 94 (ARYGVMLEKGAFDKRTAD) the chain is Cytoplasmic. A helical membrane pass occupies residues 95-115 (FLWMMIFGAISLLVLSIIPLF). The Lumenal portion of the chain corresponds to 116 to 157 (NSFFLGIPMVSMLLYVWSRENPNAQINIYGLVQLRSFYLPWA). The helical transmembrane segment at 158-178 (MLLLDVIFGSSLMPGLLGIMV) threads the bilayer. Over 179-243 (GHLYYFFAVL…FRGRSYRLNQ (65 aa)) the chain is Cytoplasmic. Positions 219 to 243 (SPVRPPANGNSGSGVFRGRSYRLNQ) are disordered.

Belongs to the derlin family. As to expression, expressed in roots, stalks, leaves, immature ears, embryo and endosperm.

The protein localises to the endoplasmic reticulum membrane. In terms of biological role, may be involved in the degradation process of specific misfolded endoplasmic reticulum (ER) luminal proteins. This chain is Derlin-1.1 (DER1.1), found in Zea mays (Maize).